The sequence spans 545 residues: Glucose-6-phosphate isomerase (545 aa).

The Proton donor role is filled by glutamate 351. Catalysis depends on residues histidine 382 and lysine 510.

The protein belongs to the GPI family.

The protein localises to the cytoplasm. The enzyme catalyses alpha-D-glucose 6-phosphate = beta-D-fructose 6-phosphate. It participates in carbohydrate biosynthesis; gluconeogenesis. The protein operates within carbohydrate degradation; glycolysis; D-glyceraldehyde 3-phosphate and glycerone phosphate from D-glucose: step 2/4. Functionally, catalyzes the reversible isomerization of glucose-6-phosphate to fructose-6-phosphate. The polypeptide is Glucose-6-phosphate isomerase (Shewanella sp. (strain ANA-3)).